A 912-amino-acid polypeptide reads, in one-letter code: MFKSLPEEEAFRALTLTLQLVASLHDIVAYTFSFAKLGNCPACFDLPLSPNPLMRDWGGAEGIGNELQELQKMIDSLQRPQDPSQVAQALLLRREVTLLQFDAAMRHLLRTFLAAGNAPAYQSVAESACYGLPPLSNALGKSIFSSQLSLPQPLDPWSPQAFALFPWRAFLEDGGPFPVISSVPDTLEYDMQMCLCGLSDCDRRVAHGELVGVQMLMEDVLLGSCHVIRKASTEWQAALDNAQPDWSKLPGLYPNQLESHPKASALLEGQCDVVMSLSLLKSFLILWKRLEVLKEHWGRFKLRGQDINSALLHRQFSELYEAEILYPSMKALARQMGKEDEFEELMLRSQSILPPKGASEIEIKTQQLQKLLESLEIHMIQEVLRKVNREMTLFLSEKSKEESTLPTDRWKHQVMKENFSVMRPQIVERFVQRLMEDSQDDGPKITFRREHLEACILSLGCDVMARERSNFETYSMCYEHILQHTRQKLSQKEQEVDLLRRSQVPSEDCAGQVAELSHDMIMEITALRAQLTDLEEENLNLKIQIRKEVQEEYRELVQALFLTCLRIKEKLDENQFNLIQKVCELIGEVRAEGIANVKQLKKTWGSARPDEETKENTAKEQLCALEQDHSSTLAALLCKARSLGRWRLAVQQAHLRGQLSRAEMESILSKKECLRIKLMAEQEAALLHQQLLAARQALTKAQTDNRKLWRQNDTQAQLLRELEHRVTQDSVTRQQLDIIKTSGMEKLLKDVEQKEQKLQLLTEEAERASKRGQLQQKKMDRDLKQMRNRLAQERSVKLDAFQRVQELQSQLYDIQWPSVQMGSPVGLRSQTHCSLSSASTLSRHPHHHFSKTHFVGSKMTRRIQRPKTVPVKHNRRIEDGSLPSVKENVQLTTFQAQTAPSGISFRPESFSS.

Coiled coils occupy residues 1-35 (MFKSLPEEEAFRALTLTLQLVASLHDIVAYTFSFA) and 220-276 (VLLG…VVMS).

This chain is Coiled-coil domain-containing protein 162, found in Mus musculus (Mouse).